The sequence spans 970 residues: Glycine dehydrogenase (decarboxylating) (970 aa).

Position 723 is an N6-(pyridoxal phosphate)lysine (lysine 723).

This sequence belongs to the GcvP family. As to quaternary structure, the glycine cleavage system is composed of four proteins: P, T, L and H. It depends on pyridoxal 5'-phosphate as a cofactor.

The catalysed reaction is N(6)-[(R)-lipoyl]-L-lysyl-[glycine-cleavage complex H protein] + glycine + H(+) = N(6)-[(R)-S(8)-aminomethyldihydrolipoyl]-L-lysyl-[glycine-cleavage complex H protein] + CO2. Functionally, the glycine cleavage system catalyzes the degradation of glycine. The P protein binds the alpha-amino group of glycine through its pyridoxal phosphate cofactor; CO(2) is released and the remaining methylamine moiety is then transferred to the lipoamide cofactor of the H protein. This Burkholderia pseudomallei (strain 1106a) protein is Glycine dehydrogenase (decarboxylating).